The following is a 96-amino-acid chain: CLAVATA3/ESR (CLE)-related protein 43 (96 aa).

A signal peptide spans 1 to 28 (MGCRDILLTFSVALLLISLFQIWLFREG). The tract at residues 71–96 (FGLNNTNSRFEDSNRRIPSSPDRLHN) is disordered. Residue N74 is glycosylated (N-linked (GlcNAc...) asparagine). Hydroxyproline occurs at positions 88 and 91. P91 carries O-linked (Ara...) hydroxyproline glycosylation.

It belongs to the CLV3/ESR signal peptide family. The O-glycosylation (arabinosylation) of the hydroxyproline Pro-91 enhances binding affinity of the CLE43p peptide for its receptor. As to expression, expressed at low levels in seedlings.

It is found in the secreted. It localises to the extracellular space. Its function is as follows. Extracellular signal peptide that regulates cell fate. Promotes pollen tube growth prolongation in a SKM1 and SKM2-dependent manner, especially under relatively high temperature (at 30 degrees Celsius), thus conferring tolerance against high temperature probably through the maintenance of mitochondrial activity. The polypeptide is CLAVATA3/ESR (CLE)-related protein 43 (Arabidopsis thaliana (Mouse-ear cress)).